A 217-amino-acid polypeptide reads, in one-letter code: Thymidylate kinase (217 aa).

Residue 16–23 (GIDGAGKT) participates in ATP binding.

This sequence belongs to the thymidylate kinase family.

It carries out the reaction dTMP + ATP = dTDP + ADP. Functionally, phosphorylation of dTMP to form dTDP in both de novo and salvage pathways of dTTP synthesis. The sequence is that of Thymidylate kinase from Xylella fastidiosa (strain M12).